The following is a 74-amino-acid chain: Sodium channel neurotoxin MeuNaTxalpha-6 (74 aa).

An N-terminal signal peptide occupies residues 1–7 (LMTGVES). The LCN-type CS-alpha/beta domain maps to 9 to 73 (RDAYIAKPHN…VPIRIPGKCH (65 aa)). 4 disulfide bridges follow: Cys19–Cys72, Cys23–Cys45, Cys31–Cys55, and Cys35–Cys57. Arg74 is a propeptide (removed by a carboxypeptidase).

Belongs to the long (4 C-C) scorpion toxin superfamily. Sodium channel inhibitor family. Alpha subfamily. Expressed by the venom gland.

Its subcellular location is the secreted. In terms of biological role, alpha toxins bind voltage-independently at site-3 of sodium channels (Nav) and inhibit the inactivation of the activated channels, thereby blocking neuronal transmission. This is Sodium channel neurotoxin MeuNaTxalpha-6 from Mesobuthus eupeus (Lesser Asian scorpion).